The primary structure comprises 256 residues: Imidazole glycerol phosphate synthase subunit HisF (256 aa).

Catalysis depends on residues Asp11 and Asp130.

This sequence belongs to the HisA/HisF family. As to quaternary structure, heterodimer of HisH and HisF.

It localises to the cytoplasm. It carries out the reaction 5-[(5-phospho-1-deoxy-D-ribulos-1-ylimino)methylamino]-1-(5-phospho-beta-D-ribosyl)imidazole-4-carboxamide + L-glutamine = D-erythro-1-(imidazol-4-yl)glycerol 3-phosphate + 5-amino-1-(5-phospho-beta-D-ribosyl)imidazole-4-carboxamide + L-glutamate + H(+). Its pathway is amino-acid biosynthesis; L-histidine biosynthesis; L-histidine from 5-phospho-alpha-D-ribose 1-diphosphate: step 5/9. IGPS catalyzes the conversion of PRFAR and glutamine to IGP, AICAR and glutamate. The HisF subunit catalyzes the cyclization activity that produces IGP and AICAR from PRFAR using the ammonia provided by the HisH subunit. This chain is Imidazole glycerol phosphate synthase subunit HisF, found in Thioalkalivibrio sulfidiphilus (strain HL-EbGR7).